Consider the following 287-residue polypeptide: Nucleotide-binding protein Dtpsy_0831 (287 aa).

10–17 provides a ligand contact to ATP; sequence GMSGSGKS. 59-62 lines the GTP pocket; that stretch reads DVRS.

The protein belongs to the RapZ-like family.

Functionally, displays ATPase and GTPase activities. The protein is Nucleotide-binding protein Dtpsy_0831 of Acidovorax ebreus (strain TPSY) (Diaphorobacter sp. (strain TPSY)).